The chain runs to 154 residues: Superoxide dismutase [Cu-Zn] (154 aa).

His-47, His-49, and His-64 together coordinate Cu cation. Residues Cys-58 and Cys-147 are joined by a disulfide bond. Residues His-64, His-72, His-81, and Asp-84 each coordinate Zn(2+). Residue His-121 participates in Cu cation binding. Position 144 (Arg-144) interacts with substrate.

This sequence belongs to the Cu-Zn superoxide dismutase family. Homodimer. The cofactor is Cu cation. Zn(2+) is required as a cofactor.

Its subcellular location is the cytoplasm. It catalyses the reaction 2 superoxide + 2 H(+) = H2O2 + O2. In terms of biological role, destroys radicals which are normally produced within the cells and which are toxic to biological systems. This Claviceps purpurea (strain 20.1) (Ergot fungus) protein is Superoxide dismutase [Cu-Zn] (SOD1).